We begin with the raw amino-acid sequence, 118 residues long: Thioredoxin H-type 2 (118 aa).

Residues 2–113 (AEEGQVIGVH…LQQTIAKHIS (112 aa)) form the Thioredoxin domain. Catalysis depends on nucleophile residues Cys-39 and Cys-42. Cys-39 and Cys-42 are disulfide-bonded.

The protein belongs to the thioredoxin family. Plant H-type subfamily.

Its subcellular location is the cytoplasm. Functionally, participates in various redox reactions through the reversible oxidation of the active center dithiol to a disulfide. The H form is known to activate a number of cytosolic enzymes. The chain is Thioredoxin H-type 2 from Nicotiana tabacum (Common tobacco).